Here is a 167-residue protein sequence, read N- to C-terminus: Endoribonuclease YbeY (167 aa).

3 residues coordinate Zn(2+): H131, H135, and H141.

The protein belongs to the endoribonuclease YbeY family. The cofactor is Zn(2+).

It localises to the cytoplasm. Functionally, single strand-specific metallo-endoribonuclease involved in late-stage 70S ribosome quality control and in maturation of the 3' terminus of the 16S rRNA. In Rickettsia africae (strain ESF-5), this protein is Endoribonuclease YbeY.